Reading from the N-terminus, the 240-residue chain is Leucyl/phenylalanyl-tRNA--protein transferase (240 aa).

This sequence belongs to the L/F-transferase family.

It is found in the cytoplasm. The catalysed reaction is N-terminal L-lysyl-[protein] + L-leucyl-tRNA(Leu) = N-terminal L-leucyl-L-lysyl-[protein] + tRNA(Leu) + H(+). The enzyme catalyses N-terminal L-arginyl-[protein] + L-leucyl-tRNA(Leu) = N-terminal L-leucyl-L-arginyl-[protein] + tRNA(Leu) + H(+). It carries out the reaction L-phenylalanyl-tRNA(Phe) + an N-terminal L-alpha-aminoacyl-[protein] = an N-terminal L-phenylalanyl-L-alpha-aminoacyl-[protein] + tRNA(Phe). Its function is as follows. Functions in the N-end rule pathway of protein degradation where it conjugates Leu, Phe and, less efficiently, Met from aminoacyl-tRNAs to the N-termini of proteins containing an N-terminal arginine or lysine. This Maridesulfovibrio salexigens (strain ATCC 14822 / DSM 2638 / NCIMB 8403 / VKM B-1763) (Desulfovibrio salexigens) protein is Leucyl/phenylalanyl-tRNA--protein transferase.